The sequence spans 457 residues: Glutamate--tRNA ligase 2 (457 aa).

The 'HIGH' region signature appears at 9 to 19; it reads PSPTGYIHIGN. The 'KMSKS' region motif lies at 250-254; the sequence is GLSKR. K253 is an ATP binding site.

It belongs to the class-I aminoacyl-tRNA synthetase family. Glutamate--tRNA ligase type 1 subfamily. In terms of assembly, monomer.

The protein resides in the cytoplasm. The enzyme catalyses tRNA(Glu) + L-glutamate + ATP = L-glutamyl-tRNA(Glu) + AMP + diphosphate. Functionally, catalyzes the attachment of glutamate to tRNA(Glu) in a two-step reaction: glutamate is first activated by ATP to form Glu-AMP and then transferred to the acceptor end of tRNA(Glu). The protein is Glutamate--tRNA ligase 2 of Brucella melitensis biotype 1 (strain ATCC 23456 / CCUG 17765 / NCTC 10094 / 16M).